The chain runs to 479 residues: Glutamate--tRNA ligase (479 aa).

Positions 21 to 31 match the 'HIGH' region motif; the sequence is PSPTGYLHVGG. The 'KMSKS' region signature appears at 248 to 252; the sequence is KLSKR. Residue Lys-251 coordinates ATP.

This sequence belongs to the class-I aminoacyl-tRNA synthetase family. Glutamate--tRNA ligase type 1 subfamily. Monomer.

It localises to the cytoplasm. The enzyme catalyses tRNA(Glu) + L-glutamate + ATP = L-glutamyl-tRNA(Glu) + AMP + diphosphate. In terms of biological role, catalyzes the attachment of glutamate to tRNA(Glu) in a two-step reaction: glutamate is first activated by ATP to form Glu-AMP and then transferred to the acceptor end of tRNA(Glu). The sequence is that of Glutamate--tRNA ligase from Haemophilus ducreyi (strain 35000HP / ATCC 700724).